The chain runs to 400 residues: Nicotinate phosphoribosyltransferase (400 aa).

Histidine 220 carries the post-translational modification Phosphohistidine; by autocatalysis.

Belongs to the NAPRTase family. Post-translationally, transiently phosphorylated on a His residue during the reaction cycle. Phosphorylation strongly increases the affinity for substrates and increases the rate of nicotinate D-ribonucleotide production. Dephosphorylation regenerates the low-affinity form of the enzyme, leading to product release.

It catalyses the reaction nicotinate + 5-phospho-alpha-D-ribose 1-diphosphate + ATP + H2O = nicotinate beta-D-ribonucleotide + ADP + phosphate + diphosphate. It participates in cofactor biosynthesis; NAD(+) biosynthesis; nicotinate D-ribonucleotide from nicotinate: step 1/1. Catalyzes the synthesis of beta-nicotinate D-ribonucleotide from nicotinate and 5-phospho-D-ribose 1-phosphate at the expense of ATP. The polypeptide is Nicotinate phosphoribosyltransferase (Escherichia coli O127:H6 (strain E2348/69 / EPEC)).